An 81-amino-acid chain; its full sequence is MDSITSAASVVAAGLAVGLAAIGPGIGQGSASQGAVEGIARQPEAEGKIRGTLLLSLAFMESLTIYGLVVALVLLFANPFA.

Helical transmembrane passes span 7–27 and 57–77; these read AASV…PGIG and LAFM…LLFA.

This sequence belongs to the ATPase C chain family. F-type ATPases have 2 components, F(1) - the catalytic core - and F(0) - the membrane proton channel. F(1) has five subunits: alpha(3), beta(3), gamma(1), delta(1), epsilon(1). F(0) has four main subunits: a(1), b(1), b'(1) and c(10-14). The alpha and beta chains form an alternating ring which encloses part of the gamma chain. F(1) is attached to F(0) by a central stalk formed by the gamma and epsilon chains, while a peripheral stalk is formed by the delta, b and b' chains.

It localises to the cellular thylakoid membrane. Its function is as follows. F(1)F(0) ATP synthase produces ATP from ADP in the presence of a proton or sodium gradient. F-type ATPases consist of two structural domains, F(1) containing the extramembraneous catalytic core and F(0) containing the membrane proton channel, linked together by a central stalk and a peripheral stalk. During catalysis, ATP synthesis in the catalytic domain of F(1) is coupled via a rotary mechanism of the central stalk subunits to proton translocation. Key component of the F(0) channel; it plays a direct role in translocation across the membrane. A homomeric c-ring of between 10-14 subunits forms the central stalk rotor element with the F(1) delta and epsilon subunits. The sequence is that of ATP synthase subunit c from Synechococcus sp. (strain CC9311).